An 845-amino-acid polypeptide reads, in one-letter code: MPLSYQHFRKLLLLDDGTEAGPLEEELPRLADADLHRRVAEDLNLGNLNVSIPWTHKVGNFTGLYSSTVPIFNPEWQTPSFPKIHLQEDIINRCQQFVGPLTVNEKRRLKLIMPARFYPTHTKYLPLDKGIKPYYPDQVVNHYFQTRHYLHTLWKAGILYKRETTRSASFCGSPYSWEQELQHGRLVIKTSQRHGDESFCSQSSGILSRSSVGPCIRSQLKQSRLGLQPRQGRLASSQPSRSGSIRAKAHPSTRRYFGVEPSGSGHIDHSVNNSSSCLHQSAVRKAAYSHLSTSKRQSSSGHAVEFHCLPPNSAGSQSQGSVSSCWWLQFRNSKPCSEYCLSHLVNLREDWGPCDEHGEHHIRIPRTPARVTGGVFLVDKNPHNTAESRLVVDFSQFSRGISRVSWPKFAVPNLQSLTNLLSSNLSWLSLDVSAAFYHIPLHPAAMPHLLIGSSGLSRYVARLSSNSRINNNQYGTMQNLHDSCSRQLYVSLMLLYKTYGWKLHLYSHPIVLGFRKIPMGVGLSPFLLAQFTSAICSVVRRAFPHCLAFSYMDDVVLGAKSVQHRESLYTAVTNFLLSLGIHLNPNKTKRWGYSLNFMGYIIGSWGTLPQDHIVQKIKHCFRKLPVNRPIDWKVCQRIVGLLGFAAPFTQCGYPALMPLYACIQAKQAFTFSPTYKAFLSKQYMNLYPVARQRPGLCQVFADATPTGWGLAIGHQRMRGTFVAPLPIHTAELLAACFARSRSGAKLIGTDNSVVLSRKYTSFPWLLGCTANWILRGTSFVYVPSALNPADDPSRGRLGLSRPLLRLPFQPTTGRTSLYAVSPSVPSHLPVRVHFASPLHVAWRPP.

The tract at residues 1 to 179 (MPLSYQHFRK…FCGSPYSWEQ (179 aa)) is terminal protein domain (TP). Positions 180–348 (ELQHGRLVIK…YCLSHLVNLR (169 aa)) are spacer. The interval 226-252 (GLQPRQGRLASSQPSRSGSIRAKAHPS) is disordered. Residues 234-243 (LASSQPSRSG) show a composition bias toward polar residues. The tract at residues 349-692 (EDWGPCDEHG…YMNLYPVARQ (344 aa)) is polymerase/reverse transcriptase domain (RT). In terms of domain architecture, Reverse transcriptase spans 359 to 602 (EHHIRIPRTP…YSLNFMGYII (244 aa)). The Mg(2+) site is built by Asp-431, Asp-553, and Asp-554. Residues 693–845 (RPGLCQVFAD…SPLHVAWRPP (153 aa)) are rnaseH domain (RH).

Belongs to the hepadnaviridae P protein family.

It carries out the reaction DNA(n) + a 2'-deoxyribonucleoside 5'-triphosphate = DNA(n+1) + diphosphate. The enzyme catalyses Endonucleolytic cleavage to 5'-phosphomonoester.. Its activity is regulated as follows. Activated by host HSP70 and HSP40 in vitro to be able to bind the epsilon loop of the pgRNA. Because deletion of the RNase H region renders the protein partly chaperone-independent, the chaperones may be needed indirectly to relieve occlusion of the RNA-binding site by this domain. Inhibited by several reverse-transcriptase inhibitors: Lamivudine, Adefovir and Entecavir. Multifunctional enzyme that converts the viral RNA genome into dsDNA in viral cytoplasmic capsids. This enzyme displays a DNA polymerase activity that can copy either DNA or RNA templates, and a ribonuclease H (RNase H) activity that cleaves the RNA strand of RNA-DNA heteroduplexes in a partially processive 3'- to 5'-endonucleasic mode. Neo-synthesized pregenomic RNA (pgRNA) are encapsidated together with the P protein, and reverse-transcribed inside the nucleocapsid. Initiation of reverse-transcription occurs first by binding the epsilon loop on the pgRNA genome, and is initiated by protein priming, thereby the 5'-end of (-)DNA is covalently linked to P protein. Partial (+)DNA is synthesized from the (-)DNA template and generates the relaxed circular DNA (RC-DNA) genome. After budding and infection, the RC-DNA migrates in the nucleus, and is converted into a plasmid-like covalently closed circular DNA (cccDNA). The activity of P protein does not seem to be necessary for cccDNA generation, and is presumably released from (+)DNA by host nuclear DNA repair machinery. The protein is Protein P of Homo sapiens (Human).